The sequence spans 152 residues: Ribosome maturation factor RimP (152 aa).

It belongs to the RimP family.

The protein resides in the cytoplasm. Required for maturation of 30S ribosomal subunits. This chain is Ribosome maturation factor RimP, found in Burkholderia orbicola (strain MC0-3).